A 429-amino-acid polypeptide reads, in one-letter code: MTGNEQNPSKWLAAEKKYDSGVYNKHDVVMVRGQGATVWDENGRSYIDCVVGYGVATLGHSHPDVVKAVQEQAGKLMVMPQTVPNDKRAEFLQELVGVLPQGLDRVFLCNSGTEAMEAAKKFAITATGRSRFVSMKRGFSGRSLGALSFTWEPKYREPFGDAVDNKSVDFVTYGNLDELRAAVTEQTAAVIMEPVQGEGGVRPASAEFIQEARRITREKGALLILDEIQTGFCRTGKMFACEHFGVIPDGMTLAKAIAGGTPTAAFAMMSEVADRMPAGGHGTTFGGNPLSMAAGVASLRAMKREGLAEQAREKGAYMMDKLRAIQSPKIREVRGLGLMIGVELKEKSAPYIHAMEHDEGVLCLAATPLVVRFLPPAVISKEQIDQVVAAFERVLNNVNPREERQAELRAQQSEMGQQQVSQGESVQTE.

Residues 112-113 (GT) and Phe139 each bind pyridoxal 5'-phosphate. Arg142 contacts substrate. 226–229 (DEIQ) lines the pyridoxal 5'-phosphate pocket. Lys255 is modified (N6-(pyridoxal phosphate)lysine). Residue Thr283 coordinates substrate. Thr284 lines the pyridoxal 5'-phosphate pocket. A disordered region spans residues 408-429 (LRAQQSEMGQQQVSQGESVQTE). Low complexity predominate over residues 411–429 (QQSEMGQQQVSQGESVQTE).

This sequence belongs to the class-III pyridoxal-phosphate-dependent aminotransferase family. LysJ subfamily. In terms of assembly, homodimer. Pyridoxal 5'-phosphate serves as cofactor.

The protein resides in the cytoplasm. The catalysed reaction is [amino-group carrier protein]-C-terminal-gamma-(L-lysyl)-L-glutamate + 2-oxoglutarate = [amino-group carrier protein]-C-terminal-N-(1-carboxy-5-oxopentan-1-yl)-L-glutamine + L-glutamate. It participates in amino-acid biosynthesis; L-lysine biosynthesis via AAA pathway; L-lysine from L-alpha-aminoadipate (Thermus route): step 4/5. Functionally, catalyzes the transfer of the amino group of L-glutamate to [LysW]-aminoadipate 6-semialdehyde, generating [LysW]-gamma-L-lysine. This Deinococcus radiodurans (strain ATCC 13939 / DSM 20539 / JCM 16871 / CCUG 27074 / LMG 4051 / NBRC 15346 / NCIMB 9279 / VKM B-1422 / R1) protein is [LysW]-aminoadipate semialdehyde transaminase.